The chain runs to 453 residues: Nuclear hormone receptor family member nhr-12 (453 aa).

Positions 1–37 are disordered; sequence MEQIPQEQKTEPFLASFTTTEKLGTETPTTSITPNTQ. Over residues 18–36 the composition is skewed to low complexity; it reads TTTEKLGTETPTTSITPNT. The nuclear receptor DNA-binding region spans 44 to 119; that stretch reads KPNCAVCNEV…VGMNPECVQN (76 aa). 2 NR C4-type zinc fingers span residues 47–67 and 83–107; these read CAVCNEVGDGLHFGAEACRAC and CRAGRNCEVSSNIRCMCRSCRYDKC. An NR LBD domain is found at 178–451; sequence FSPASLPGLS…ENFVNIINGK (274 aa).

The protein belongs to the nuclear hormone receptor family.

It is found in the nucleus. Its function is as follows. Orphan nuclear receptor. The protein is Nuclear hormone receptor family member nhr-12 (nhr-12) of Caenorhabditis elegans.